A 380-amino-acid chain; its full sequence is Cytochrome b (380 aa).

A run of 4 helical transmembrane segments spans residues 33-53, 77-98, 113-133, and 178-198; these read FGSL…FLAM, WLIR…YLHI, WNIG…GYVL, and FFAF…LHLL. Heme b contacts are provided by H83 and H97. Heme b is bound by residues H182 and H196. A ubiquinone is bound at residue H201. 4 helical membrane passes run 226-246, 288-308, 320-340, and 347-367; these read YKDL…ALFT, LGGV…PILH, VTQF…WIGG, and YIII…LIMP.

This sequence belongs to the cytochrome b family. The cytochrome bc1 complex contains 3 respiratory subunits (MT-CYB, CYC1 and UQCRFS1), 2 core proteins (UQCRC1 and UQCRC2) and probably 6 low-molecular weight proteins. Heme b serves as cofactor.

It localises to the mitochondrion inner membrane. Functionally, component of the ubiquinol-cytochrome c reductase complex (complex III or cytochrome b-c1 complex) that is part of the mitochondrial respiratory chain. The b-c1 complex mediates electron transfer from ubiquinol to cytochrome c. Contributes to the generation of a proton gradient across the mitochondrial membrane that is then used for ATP synthesis. This is Cytochrome b (mt-cyb) from Pagrus major (Red sea bream).